A 318-amino-acid chain; its full sequence is Replication factor C small subunit (318 aa).

G43–T50 provides a ligand contact to ATP.

Belongs to the activator 1 small subunits family. RfcS subfamily. Heteromultimer composed of small subunits (RfcS) and large subunits (RfcL).

Its function is as follows. Part of the RFC clamp loader complex which loads the PCNA sliding clamp onto DNA. The chain is Replication factor C small subunit from Thermoplasma volcanium (strain ATCC 51530 / DSM 4299 / JCM 9571 / NBRC 15438 / GSS1).